Reading from the N-terminus, the 116-residue chain is Large ribosomal subunit protein uL18 (116 aa).

This sequence belongs to the universal ribosomal protein uL18 family. Part of the 50S ribosomal subunit; part of the 5S rRNA/L5/L18/L25 subcomplex. Contacts the 5S and 23S rRNAs.

This is one of the proteins that bind and probably mediate the attachment of the 5S RNA into the large ribosomal subunit, where it forms part of the central protuberance. This is Large ribosomal subunit protein uL18 from Caulobacter vibrioides (strain ATCC 19089 / CIP 103742 / CB 15) (Caulobacter crescentus).